We begin with the raw amino-acid sequence, 264 residues long: Formamidopyrimidine-DNA glycosylase (264 aa).

Pro-2 (schiff-base intermediate with DNA) is an active-site residue. Glu-3 serves as the catalytic Proton donor. Residue Lys-58 is the Proton donor; for beta-elimination activity of the active site. The DNA site is built by His-89, Arg-107, and Arg-144. The segment at Arg-229–Lys-263 adopts an FPG-type zinc-finger fold. Arg-253 serves as the catalytic Proton donor; for delta-elimination activity.

The protein belongs to the FPG family. As to quaternary structure, monomer. Zn(2+) serves as cofactor.

It catalyses the reaction Hydrolysis of DNA containing ring-opened 7-methylguanine residues, releasing 2,6-diamino-4-hydroxy-5-(N-methyl)formamidopyrimidine.. The enzyme catalyses 2'-deoxyribonucleotide-(2'-deoxyribose 5'-phosphate)-2'-deoxyribonucleotide-DNA = a 3'-end 2'-deoxyribonucleotide-(2,3-dehydro-2,3-deoxyribose 5'-phosphate)-DNA + a 5'-end 5'-phospho-2'-deoxyribonucleoside-DNA + H(+). Functionally, involved in base excision repair of DNA damaged by oxidation or by mutagenic agents. Acts as a DNA glycosylase that recognizes and removes damaged bases. Has a preference for oxidized purines, such as 7,8-dihydro-8-oxoguanine (8-oxoG). Has AP (apurinic/apyrimidinic) lyase activity and introduces nicks in the DNA strand. Cleaves the DNA backbone by beta-delta elimination to generate a single-strand break at the site of the removed base with both 3'- and 5'-phosphates. This Solibacter usitatus (strain Ellin6076) protein is Formamidopyrimidine-DNA glycosylase.